We begin with the raw amino-acid sequence, 1461 residues long: Autotransporter adhesin SadA (1461 aa).

Positions 1 to 54 (MNRIFKVLWNAATGTFVVTSETAKSRGKKNGRRKLAVSALIGLSSIMVSADALA) are cleaved as a signal peptide. The interval 55-1372 (NAGNDTGDGV…EEANTYTDQK (1318 aa)) is surface exposed passenger domain. The translocator domain stretch occupies residues 1373-1461 (MGEMNSKIKG…SAAIGAGFQW (89 aa)). Transmembrane regions (beta stranded) follow at residues 1407–1417 (GANMTSIAGGT), 1421–1431 (ESAVAIGVSMV), 1440–1446 (KLQGTSN), and 1450–1461 (DYSAAIGAGFQW).

Belongs to the autotransporter-2 (AT-2) (TC 1.B.40) family. In terms of assembly, homotrimer.

It localises to the cell surface. It is found in the cell outer membrane. Involved in cell aggregation, biofilm formation, and adhesion to human intestinal epithelial cells. In Salmonella typhimurium (strain LT2 / SGSC1412 / ATCC 700720), this protein is Autotransporter adhesin SadA.